We begin with the raw amino-acid sequence, 379 residues long: Programmed cell death protein 2-like (379 aa).

This is Programmed cell death protein 2-like (PDCD2L) from Gallus gallus (Chicken).